We begin with the raw amino-acid sequence, 1044 residues long: DEMETER-like protein 3 (1044 aa).

A compositionally biased stretch (polar residues) spans 1-15 (MLTDGSQHTYQNGET). The tract at residues 1-107 (MLTDGSQHTY…KPRNPATTRL (107 aa)) is disordered. The span at 16-30 (KNSKEHERKCDESAH) shows a compositional bias: basic and acidic residues. Residues 38–53 (THKKKEKKNSKEKHGI) are compositionally biased toward basic residues. Residues 54–66 (KHSESEHLQDDIS) are compositionally biased toward basic and acidic residues. Over residues 71–89 (GKGRRRNSKGTPKKLRFNR) the composition is skewed to basic residues. Residues 348–445 (KVNLDPETIK…AFMSVAAKFP (98 aa)) are DEMETER. C678, C685, C688, and C694 together coordinate [4Fe-4S] cluster. A disordered region spans residues 1024–1044 (VRRLHTPPDERGPKFMSDDDI).

It belongs to the DNA glycosylase family. DEMETER subfamily. The cofactor is [4Fe-4S] cluster.

It is found in the nucleus. Its function is as follows. Potential transcriptional activator that may act by nicking the target promoter. Catalyzes the release of 5-methylcytosine (5-meC) from DNA by a glycosylase/lyase mechanism. The chain is DEMETER-like protein 3 (DML3) from Arabidopsis thaliana (Mouse-ear cress).